The primary structure comprises 423 residues: 3-phosphoshikimate 1-carboxyvinyltransferase (423 aa).

Residues Lys-28, Ser-29, and Arg-33 each coordinate 3-phosphoshikimate. Residue Lys-28 coordinates phosphoenolpyruvate. Positions 96 and 124 each coordinate phosphoenolpyruvate. Residues Ser-169, Ser-170, Gln-171, Ser-198, Glu-312, and His-339 each contribute to the 3-phosphoshikimate site. Gln-171 serves as a coordination point for phosphoenolpyruvate. Glu-312 serves as the catalytic Proton acceptor. Arg-343, Arg-384, and Lys-409 together coordinate phosphoenolpyruvate.

Belongs to the EPSP synthase family. As to quaternary structure, monomer.

It localises to the cytoplasm. The catalysed reaction is 3-phosphoshikimate + phosphoenolpyruvate = 5-O-(1-carboxyvinyl)-3-phosphoshikimate + phosphate. The protein operates within metabolic intermediate biosynthesis; chorismate biosynthesis; chorismate from D-erythrose 4-phosphate and phosphoenolpyruvate: step 6/7. Its function is as follows. Catalyzes the transfer of the enolpyruvyl moiety of phosphoenolpyruvate (PEP) to the 5-hydroxyl of shikimate-3-phosphate (S3P) to produce enolpyruvyl shikimate-3-phosphate and inorganic phosphate. This chain is 3-phosphoshikimate 1-carboxyvinyltransferase, found in Acidothermus cellulolyticus (strain ATCC 43068 / DSM 8971 / 11B).